Reading from the N-terminus, the 213-residue chain is NADH-quinone oxidoreductase subunit B 1 (213 aa).

The [4Fe-4S] cluster site is built by Cys82, Cys83, Cys148, and Cys177.

The protein belongs to the complex I 20 kDa subunit family. NDH-1 is composed of 14 different subunits. Subunits NuoB, C, D, E, F, and G constitute the peripheral sector of the complex. It depends on [4Fe-4S] cluster as a cofactor.

The protein localises to the cell inner membrane. It catalyses the reaction a quinone + NADH + 5 H(+)(in) = a quinol + NAD(+) + 4 H(+)(out). In terms of biological role, NDH-1 shuttles electrons from NADH, via FMN and iron-sulfur (Fe-S) centers, to quinones in the respiratory chain. The immediate electron acceptor for the enzyme in this species is believed to be ubiquinone. Couples the redox reaction to proton translocation (for every two electrons transferred, four hydrogen ions are translocated across the cytoplasmic membrane), and thus conserves the redox energy in a proton gradient. The protein is NADH-quinone oxidoreductase subunit B 1 of Koribacter versatilis (strain Ellin345).